A 289-amino-acid polypeptide reads, in one-letter code: GTPase Era (289 aa).

Positions 2–167 (KSGFISLIGR…LDEIYKYLPE (166 aa)) constitute an Era-type G domain. Residues 10 to 17 (GRTNAGKS) form a G1 region. Position 10-17 (10-17 (GRTNAGKS)) interacts with GTP. A G2 region spans residues 36–40 (NATRR). The interval 57 to 60 (DTPG) is G3. GTP-binding positions include 57–61 (DTPGL) and 116–119 (TKID). A G4 region spans residues 116–119 (TKID). A G5 region spans residues 146-148 (LSV). Positions 198–274 (VSDEVPYSTD…FLKINVKIDK (77 aa)) constitute a KH type-2 domain.

The protein belongs to the TRAFAC class TrmE-Era-EngA-EngB-Septin-like GTPase superfamily. Era GTPase family. As to quaternary structure, monomer.

The protein resides in the cytoplasm. It localises to the cell inner membrane. An essential GTPase that binds both GDP and GTP, with rapid nucleotide exchange. Plays a role in 16S rRNA processing and 30S ribosomal subunit biogenesis and possibly also in cell cycle regulation and energy metabolism. This is GTPase Era from Campylobacter fetus subsp. fetus (strain 82-40).